The primary structure comprises 261 residues: Adenosylcobinamide-GDP ribazoletransferase (261 aa).

Transmembrane regions (helical) follow at residues G4–W26, L40–L60, P62–L82, V110–M130, F140–I160, C197–F217, and I237–L257.

This sequence belongs to the CobS family. The cofactor is Mg(2+).

It localises to the cell membrane. The enzyme catalyses alpha-ribazole + adenosylcob(III)inamide-GDP = adenosylcob(III)alamin + GMP + H(+). It carries out the reaction alpha-ribazole 5'-phosphate + adenosylcob(III)inamide-GDP = adenosylcob(III)alamin 5'-phosphate + GMP + H(+). It functions in the pathway cofactor biosynthesis; adenosylcobalamin biosynthesis; adenosylcobalamin from cob(II)yrinate a,c-diamide: step 7/7. Joins adenosylcobinamide-GDP and alpha-ribazole to generate adenosylcobalamin (Ado-cobalamin). Also synthesizes adenosylcobalamin 5'-phosphate from adenosylcobinamide-GDP and alpha-ribazole 5'-phosphate. This is Adenosylcobinamide-GDP ribazoletransferase from Halalkalibacterium halodurans (strain ATCC BAA-125 / DSM 18197 / FERM 7344 / JCM 9153 / C-125) (Bacillus halodurans).